A 1531-amino-acid polypeptide reads, in one-letter code: Nuclear factor of activated T-cells 5 (1531 aa).

Disordered regions lie at residues 34 to 89 and 114 to 141; these read ELQL…TSSS and VSNRGVSEKQLTSNTVQQHPSTPKRHTV. Positions 41–51 are enriched in polar residues; sequence RETSVASMSQT. Positions 63–89 are enriched in low complexity; that stretch reads VVAADASSAPSSSSMGGACSSFTTSSS. S120 bears the Phosphoserine mark. K122 carries the N6-acetyllysine modification. Over residues 122–134 the composition is skewed to polar residues; it reads KQLTSNTVQQHPS. S134 carries the phosphoserine modification. At T135 the chain carries Phosphothreonine; by CDK5. S155 is subject to Phosphoserine. Disordered stretches follow at residues 175 to 220 and 241 to 265; these read WMED…CEES and TTDNKGNSKAGNGTLENQKGTGVKK. The span at 179 to 192 shows a compositional bias: low complexity; sequence SPSNFSNMSTSSYN. The span at 200–212 shows a compositional bias: basic residues; sequence KSRKRNPKQRPGV. Over residues 241–260 the composition is skewed to polar residues; that stretch reads TTDNKGNSKAGNGTLENQKG. One can recognise an RHD domain in the interval 264–443; sequence KKSPMLCGQY…SPILCTQPAG (180 aa). A DNA-binding region spans residues 293 to 300; sequence RARYLTEG. Residue K556 forms a Glycyl lysine isopeptide (Lys-Gly) (interchain with G-Cter in SUMO1); alternate linkage. A Glycyl lysine isopeptide (Lys-Gly) (interchain with G-Cter in SUMO2); alternate cross-link involves residue K556. S561 is subject to Phosphoserine. Residues K573 and K603 each participate in a glycyl lysine isopeptide (Lys-Gly) (interchain with G-Cter in SUMO2) cross-link. 6 disordered regions span residues 640–666, 841–891, 958–996, 1211–1304, 1316–1371, and 1473–1502; these read NIAGNGSFSSPSSSHLPSENEKQQQIQ, VSPG…QVME, PPAVSGNETSTTTTQQVATPGTTMFQTSSSGDGEETGTQ, PQVA…QEQQ, APMN…QEQQ, and ISQPGQPQNEGQPPVTTLLSQQMPENSPLA. Over residues 646-656 the composition is skewed to low complexity; it reads SFSSPSSSHLP. 2 stretches are compositionally biased toward polar residues: residues 841 to 852 and 869 to 878; these read VSPGMFSSTEPT and HPQSENTLSN. Low complexity-rich tracts occupy residues 879-888 and 960-980; these read QQQQQQQQQQ and AVSGNETSTTTTQQVATPGTT. Composition is skewed to polar residues over residues 981–996 and 1224–1247; these read MFQTSSSGDGEETGTQ and PQSQQGTMFQSQHSIVAMQSNSPS. Positions 1248 to 1266 are enriched in low complexity; that stretch reads QEQQQQQQQQQQQQQQQQQ. 2 stretches are compositionally biased toward polar residues: residues 1267-1278 and 1291-1304; these read SILFSNQNTMAT and FNPNQNPMANQEQQ. Residues 1320-1330 are compositionally biased toward low complexity; sequence QEQQPMQFQSQ. Polar residues predominate over residues 1331 to 1371; the sequence is STVSSLQNPGPTQSESSQTPLFHSSPQIQLVQGSPSSQEQQ. Over residues 1475–1486 the composition is skewed to low complexity; it reads QPGQPQNEGQPP. Residues 1487 to 1502 are compositionally biased toward polar residues; the sequence is VTTLLSQQMPENSPLA.

Homodimer when bound to DNA, completely encircles its DNA target. Interacts with CIDEC; this interaction is direct and retains NFAT5 in the cytoplasm. Does not bind with Fos and Jun transcription factors. Interacts with DDX5 and DDX17; this interaction leads to DDX5/DDX17 recruitment to LNC2 and S100A4 promoters and NFAT5-mediated DDX5/DDX17-enhanced transactivation. In terms of processing, phosphorylated. Phosphorylated at Thr-135 by CDK5 in response to osmotic stress; this phosphorylation mediates its rapid nuclear localization. Post-translationally, poly-ADP-ribosylated by PARP1 in response to DNA damage, promoting recruitment to sites of R-loop-associated DNA damage. Widely expressed, with highest levels in skeletal muscle, brain, heart and peripheral blood leukocytes.

Its subcellular location is the nucleus. It is found in the cytoplasm. The protein localises to the chromosome. Its function is as follows. Transcription factor involved, among others, in the transcriptional regulation of osmoprotective and inflammatory genes. Binds the DNA consensus sequence 5'-[ACT][AG]TGGAAA[CAT]A[TA][ATC][CA][ATG][GT][GAC][CG][CT]-3'. Mediates the transcriptional response to hypertonicity. Positively regulates the transcription of LCN2 and S100A4 genes; optimal transactivation of these genes requires the presence of DDX5/DDX17. Also involved in the DNA damage response by preventing formation of R-loops; R-loops are composed of a DNA:RNA hybrid and the associated non-template single-stranded DNA. The sequence is that of Nuclear factor of activated T-cells 5 from Homo sapiens (Human).